The primary structure comprises 120 residues: Large ribosomal subunit protein uL18 (120 aa).

Basic residues predominate over residues 1 to 20; sequence MKSTRKSATQRRHRRLRRHL. Positions 1 to 26 are disordered; sequence MKSTRKSATQRRHRRLRRHLSGTSER.

It belongs to the universal ribosomal protein uL18 family. In terms of assembly, part of the 50S ribosomal subunit; part of the 5S rRNA/L5/L18/L25 subcomplex. Contacts the 5S and 23S rRNAs.

Its function is as follows. This is one of the proteins that bind and probably mediate the attachment of the 5S RNA into the large ribosomal subunit, where it forms part of the central protuberance. This chain is Large ribosomal subunit protein uL18, found in Synechocystis sp. (strain ATCC 27184 / PCC 6803 / Kazusa).